The chain runs to 417 residues: GTP-binding protein YPT11 (417 aa).

The interval 1-34 is disordered; it reads MSQRKRYSLNVVTSPSIPSPTPSAPIRTNESNWE. GTP contacts are provided by residues 97 to 104, 228 to 232, and 292 to 295; these read GDANVGKT, DTAGQ, and NKID. 2 S-geranylgeranyl cysteine lipidation sites follow: Cys-415 and Cys-416.

The protein belongs to the small GTPase superfamily. Rab family. In terms of assembly, interacts with MYO2 (via C-terminal tail domain). Interacts with YIF1, YIP3, YIP4 and YIP5.

It localises to the endoplasmic reticulum membrane. The protein localises to the bud tip. Its subcellular location is the bud neck. Involved in the positive control of both endoplasmic reticulum (ER) and mitochondrion inheritance during cell divison. Required for the MYO2-dependent retention of newly inherited mitochondria at the bud tip in developing daughter cells. In Saccharomyces cerevisiae (strain YJM789) (Baker's yeast), this protein is GTP-binding protein YPT11 (YPT11).